Reading from the N-terminus, the 255-residue chain is Ribosomal RNA large subunit methyltransferase E (255 aa).

Residues Gly-50, Trp-52, Asp-68, Asp-84, and Asp-108 each contribute to the S-adenosyl-L-methionine site. Lys-148 serves as the catalytic Proton acceptor. Positions 195–253 (PVRSGEIYDVTVDSVGRTGDGIAMIQGFAVIVKNASPGERLRIKIGPVKQRFAFASILE) constitute a TRAM domain.

This sequence belongs to the class I-like SAM-binding methyltransferase superfamily. RNA methyltransferase RlmE family.

It localises to the cytoplasm. The catalysed reaction is uridine(2552) in 23S rRNA + S-adenosyl-L-methionine = 2'-O-methyluridine(2552) in 23S rRNA + S-adenosyl-L-homocysteine + H(+). Functionally, specifically methylates the uridine in position 2552 of 23S rRNA at the 2'-O position of the ribose in the fully assembled 50S ribosomal subunit. The sequence is that of Ribosomal RNA large subunit methyltransferase E from Methanothrix thermoacetophila (strain DSM 6194 / JCM 14653 / NBRC 101360 / PT) (Methanosaeta thermophila).